Consider the following 252-residue polypeptide: uncharacterized protein (252 aa).

A run of 10 repeats spans residues 68–82 (TYNQ…DLVD), 83–97 (TYNQ…DLVD), 98–112 (TYNQ…DLVD), 113–127 (TYNQ…DLVD), 128–142 (TYNQ…DLVD), 143–157 (TYNQ…DLVD), 158–172 (TYNQ…DLID), 173–187 (TYNQ…DLVD), 188–202 (TYNQ…DLVD), and 203–217 (TYNQ…DLVD). Residues 68–246 (TYNQSQNVCP…LIDTYNQSQN (179 aa)) are 13 X 15 AA tandem repeats. The 11; truncated repeat unit spans residues 218 to 230 (TYNQSQNVCPQDL). A 12; truncated repeat occupies 231 to 239 (NVYTQDLID). A 13; truncated repeat occupies 240–246 (TYNQSQN).

A protein probably derived from this gene is found in cuboidal crystalline inclusions, but is not toxic even when coexpressed with upstream ORF1. The protein runs anomalously as a 50 kDa band in gels. This is an uncharacterized protein from Bacillus thuringiensis subsp. kurstaki.